Reading from the N-terminus, the 134-residue chain is uncharacterized protein (134 aa).

Helical transmembrane passes span 26 to 46 (VAVF…GNIG), 55 to 75 (LLKF…QIIV), and 101 to 121 (YAPM…GLIL).

It is found in the membrane. This is an uncharacterized protein from Dictyostelium discoideum (Social amoeba).